Reading from the N-terminus, the 367-residue chain is Glutamate 5-kinase (367 aa).

Lys-17 lines the ATP pocket. The substrate site is built by Ser-57, Asp-144, and Asn-156. Residues 176 to 177 (SD) and 217 to 223 (TGGMVSK) contribute to the ATP site. Residues 279 to 357 (VGSLTLDEGA…SELPCELRRP (79 aa)) enclose the PUA domain.

It belongs to the glutamate 5-kinase family.

Its subcellular location is the cytoplasm. It catalyses the reaction L-glutamate + ATP = L-glutamyl 5-phosphate + ADP. It participates in amino-acid biosynthesis; L-proline biosynthesis; L-glutamate 5-semialdehyde from L-glutamate: step 1/2. In terms of biological role, catalyzes the transfer of a phosphate group to glutamate to form L-glutamate 5-phosphate. This chain is Glutamate 5-kinase, found in Mycobacterium leprae (strain Br4923).